The sequence spans 503 residues: Aromatase (503 aa).

Transmembrane regions (helical) follow at residues 19–39 (EAMP…LLVW) and 303–323 (MLIA…FLIA). Positions 309 and 374 each coordinate substrate. Cys-437 contacts heme.

The protein belongs to the cytochrome P450 family. It depends on heme as a cofactor. In terms of processing, phosphorylated in vitro by PKA and PKG/PRKG1. These phosphorylations inhibit the catalytic activity as measured by estrone synthesis from androstenedione (36% decrease for PKA and 30% for PKG/PRKG1). As to expression, widely expressed, including in adult and fetal brain, placenta, skin fibroblasts, adipose tissue and gonads.

It is found in the endoplasmic reticulum membrane. The protein resides in the microsome membrane. It catalyses the reaction testosterone + 3 reduced [NADPH--hemoprotein reductase] + 3 O2 = 17beta-estradiol + formate + 3 oxidized [NADPH--hemoprotein reductase] + 4 H2O + 4 H(+). The enzyme catalyses androst-4-ene-3,17-dione + 3 reduced [NADPH--hemoprotein reductase] + 3 O2 = estrone + formate + 3 oxidized [NADPH--hemoprotein reductase] + 4 H2O + 4 H(+). The catalysed reaction is androst-4-ene-3,17-dione + reduced [NADPH--hemoprotein reductase] + O2 = 19-hydroxyandrost-4-ene-3,17-dione + oxidized [NADPH--hemoprotein reductase] + H2O + H(+). It carries out the reaction 19-hydroxyandrost-4-ene-3,17-dione + reduced [NADPH--hemoprotein reductase] + O2 = 19-oxo-androst-4-ene-3,17-dione + oxidized [NADPH--hemoprotein reductase] + 2 H2O + H(+). It catalyses the reaction 19-oxo-androst-4-ene-3,17-dione + reduced [NADPH--hemoprotein reductase] + O2 = estrone + formate + oxidized [NADPH--hemoprotein reductase] + H2O + 2 H(+). The enzyme catalyses estrone + reduced [NADPH--hemoprotein reductase] + O2 = 2-hydroxyestrone + oxidized [NADPH--hemoprotein reductase] + H2O + H(+). The catalysed reaction is 17beta-hydroxy-5alpha-androstan-3-one + reduced [NADPH--hemoprotein reductase] + O2 = 17beta,19-dihydroxy-3-oxo-5alpha-androstanone + oxidized [NADPH--hemoprotein reductase] + H2O + H(+). It carries out the reaction 17beta,19-dihydroxy-3-oxo-5alpha-androstanone + reduced [NADPH--hemoprotein reductase] + O2 = 17beta-hydroxy-3,19-dioxo-5alpha-androstanone + oxidized [NADPH--hemoprotein reductase] + 2 H2O + H(+). It catalyses the reaction 17beta-hydroxy-3,19-dioxo-5alpha-androstanone + reduced [NADPH--hemoprotein reductase] + O2 = 17beta-hydroxy-3-oxo-19-nor-5alpha-androst-1-ene + formate + oxidized [NADPH--hemoprotein reductase] + H2O + 2 H(+). Its pathway is steroid hormone biosynthesis. A cytochrome P450 monooxygenase that catalyzes the conversion of C19 androgens, androst-4-ene-3,17-dione (androstenedione) and testosterone to the C18 estrogens, estrone and estradiol, respectively. Catalyzes three successive oxidations of C19 androgens: two conventional oxidations at C19 yielding 19-hydroxy and 19-oxo/19-aldehyde derivatives, followed by a third oxidative aromatization step that involves C1-beta hydrogen abstraction combined with cleavage of the C10-C19 bond to yield a phenolic A ring and formic acid. Alternatively, the third oxidative reaction yields a 19-norsteroid and formic acid. Converts dihydrotestosterone to delta1,10-dehydro 19-nordihydrotestosterone and may play a role in homeostasis of this potent androgen. Also displays 2-hydroxylase activity toward estrone. Mechanistically, uses molecular oxygen inserting one oxygen atom into a substrate, and reducing the second into a water molecule, with two electrons provided by NADPH via cytochrome P450 reductase (CPR; NADPH-ferrihemoprotein reductase). The chain is Aromatase from Homo sapiens (Human).